A 297-amino-acid chain; its full sequence is Carbamate kinase (297 aa).

Belongs to the carbamate kinase family.

The protein localises to the cytoplasm. The catalysed reaction is hydrogencarbonate + NH4(+) + ATP = carbamoyl phosphate + ADP + H2O + H(+). It carries out the reaction carbamate + ATP = carbamoyl phosphate + ADP. It catalyses the reaction hydrogencarbonate + NH4(+) = carbamate + H2O + H(+). Its pathway is nitrogen metabolism; (S)-allantoin degradation. In terms of biological role, kinase involved in the anaerobic nitrogen utilization via the assimilation of allantoin. Catalyzes the transfer of a phosphate group from carbamoyl phosphate to ADP to produce ATP and leave carbamate, which spontaneously hydrolyzes to ammonia and hydrogencarbonate. The sequence is that of Carbamate kinase from Escherichia coli O6:H1 (strain CFT073 / ATCC 700928 / UPEC).